We begin with the raw amino-acid sequence, 210 residues long: Methylthioribulose-1-phosphate dehydratase (210 aa).

Residues His-97 and His-99 each coordinate Zn(2+).

Belongs to the aldolase class II family. MtnB subfamily. As to quaternary structure, homotetramer. Requires Zn(2+) as cofactor.

The enzyme catalyses 5-(methylsulfanyl)-D-ribulose 1-phosphate = 5-methylsulfanyl-2,3-dioxopentyl phosphate + H2O. Its pathway is amino-acid biosynthesis; L-methionine biosynthesis via salvage pathway; L-methionine from S-methyl-5-thio-alpha-D-ribose 1-phosphate: step 2/6. Its function is as follows. Catalyzes the dehydration of methylthioribulose-1-phosphate (MTRu-1-P) into 2,3-diketo-5-methylthiopentyl-1-phosphate (DK-MTP-1-P). The polypeptide is Methylthioribulose-1-phosphate dehydratase (Geobacillus kaustophilus (strain HTA426)).